The primary structure comprises 257 residues: MVALRLIPCLDVANGRVVKGVNFVGLRDAGDPVELACRYSREGADELVFLDIAASHEARATLVEIVRRTAESVTIPFTVGGGISSIEGITELLRAGADKISLNSSAVKDPGLVSRGACQFGSQCIVVAIDAKRRLEESSGWDVFVNGGRKNTGLDALSWARKVVELGAGEILLTSMDGDGTQKGYDLELTKTISQSVQVPVIASGGAGCLEDVFEAFEYGNASAALLASLLHDQDLTIEEIKNYLLKKNLIIRPTNY.

Residues D11 and D130 contribute to the active site.

The protein belongs to the HisA/HisF family. In terms of assembly, heterodimer of HisH and HisF.

Its subcellular location is the cytoplasm. The enzyme catalyses 5-[(5-phospho-1-deoxy-D-ribulos-1-ylimino)methylamino]-1-(5-phospho-beta-D-ribosyl)imidazole-4-carboxamide + L-glutamine = D-erythro-1-(imidazol-4-yl)glycerol 3-phosphate + 5-amino-1-(5-phospho-beta-D-ribosyl)imidazole-4-carboxamide + L-glutamate + H(+). It participates in amino-acid biosynthesis; L-histidine biosynthesis; L-histidine from 5-phospho-alpha-D-ribose 1-diphosphate: step 5/9. IGPS catalyzes the conversion of PRFAR and glutamine to IGP, AICAR and glutamate. The HisF subunit catalyzes the cyclization activity that produces IGP and AICAR from PRFAR using the ammonia provided by the HisH subunit. This is Imidazole glycerol phosphate synthase subunit HisF from Prochlorococcus marinus (strain SARG / CCMP1375 / SS120).